Here is a 227-residue protein sequence, read N- to C-terminus: Uridylate kinase (227 aa).

7–11 (KISGK) is an ATP binding site. Gly-44 contributes to the UMP binding site. ATP contacts are provided by Gly-45 and Arg-49. UMP contacts are provided by residues Asp-66 and 114 to 120 (FQPGQST). Thr-140, Asn-141, Tyr-146, and Asp-149 together coordinate ATP.

The protein belongs to the UMP kinase family. In terms of assembly, homohexamer.

The protein localises to the cytoplasm. It carries out the reaction UMP + ATP = UDP + ADP. It functions in the pathway pyrimidine metabolism; CTP biosynthesis via de novo pathway; UDP from UMP (UMPK route): step 1/1. Unlike most bacteria, is not activated by GTP. UTP acts as a competitive inhibitor against both substrates. High concentration of UMP abolishes the inhibition of UTP at low ATP concentrations, indicating that UTP binds to the acceptor site (UMP site). Its function is as follows. Catalyzes the reversible phosphorylation of UMP to UDP, with ATP as the most efficient phosphate donor. Is also able to phosphorylate dUMP, although much less efficiently. In Saccharolobus solfataricus (strain ATCC 35092 / DSM 1617 / JCM 11322 / P2) (Sulfolobus solfataricus), this protein is Uridylate kinase (pyrH).